A 535-amino-acid chain; its full sequence is Flavin-containing monooxygenase 2 (535 aa).

A2 is subject to N-acetylalanine. FAD-binding positions include 9 to 13, E32, 40 to 41, and 61 to 62; these read GAGVS, VW, and NT. NADP(+)-binding positions include 60–61 and 195–198; these read TN and SGSD. Residue K492 forms a Glycyl lysine isopeptide (Lys-Gly) (interchain with G-Cter in SUMO) linkage. Residues 510 to 530 traverse the membrane as a helical segment; the sequence is FSVSFLLKILGLLAVVVAFFC.

It belongs to the FMO family. The cofactor is FAD. It depends on Mg(2+) as a cofactor. As to expression, expressed in lung (at protein level). Expressed predominantly in lung, and at a much lesser extent in kidney. Also expressed in fetal lung, but not in liver, kidney and brain.

It is found in the microsome membrane. It localises to the endoplasmic reticulum membrane. Catalyzes the oxidative metabolism of numerous xenobiotics, including mainly therapeutic drugs and insecticides that contain a soft nucleophile, most commonly nitrogen and sulfur and participates to their bioactivation. Specifically catalyzes S-oxygenation of sulfur derived compounds such as thioureas-derived compounds, thioetherorganophosphates to their sulfenic acid. In vitro, catalyzes S-oxygenation of the second-line antitubercular drugs thiacetazone (TAZ) and ethionamide (ETA), forming a sulfinic acid and a carbodiimide via a postulated sulfenic acid intermediate. Also catalyzes S-oxygenation of the thioether-containing organophosphate insecticides, phorate and disulfoton. The polypeptide is Flavin-containing monooxygenase 2 (Homo sapiens (Human)).